Reading from the N-terminus, the 81-residue chain is MKYPLVPLVNELTFSFLVFWLCLPVALLLFLLIIWLRFLLSQDSEENDSDVCLDWEPWSKNPDEFCQEEMLHSQEEERPCC.

Residues 16-36 traverse the membrane as a helical segment; that stretch reads FLVFWLCLPVALLLFLLIIWL.

This sequence belongs to the adipogenin family. In terms of tissue distribution, highly expressed in subcutaneous, perirenal and mesecentric adipose tissue.

The protein localises to the membrane. Its subcellular location is the nucleus. Functionally, plays a role in stimulating adipocyte differentiation and development. In Bos taurus (Bovine), this protein is Adipogenin.